The sequence spans 281 residues: 2-C-methyl-D-erythritol 4-phosphate cytidylyltransferase (281 aa).

Belongs to the IspD/TarI cytidylyltransferase family. IspD subfamily.

The catalysed reaction is 2-C-methyl-D-erythritol 4-phosphate + CTP + H(+) = 4-CDP-2-C-methyl-D-erythritol + diphosphate. It functions in the pathway isoprenoid biosynthesis; isopentenyl diphosphate biosynthesis via DXP pathway; isopentenyl diphosphate from 1-deoxy-D-xylulose 5-phosphate: step 2/6. Its function is as follows. Catalyzes the formation of 4-diphosphocytidyl-2-C-methyl-D-erythritol from CTP and 2-C-methyl-D-erythritol 4-phosphate (MEP). The polypeptide is 2-C-methyl-D-erythritol 4-phosphate cytidylyltransferase (Psychrobacter arcticus (strain DSM 17307 / VKM B-2377 / 273-4)).